The chain runs to 101 residues: CRISPR-associated endoribonuclease Cas2 (101 aa).

Mg(2+) is bound at residue Asp17.

Belongs to the CRISPR-associated endoribonuclease Cas2 protein family. In terms of assembly, homodimer, forms a heterotetramer with a Cas1 homodimer. It depends on Mg(2+) as a cofactor.

In terms of biological role, CRISPR (clustered regularly interspaced short palindromic repeat), is an adaptive immune system that provides protection against mobile genetic elements (viruses, transposable elements and conjugative plasmids). CRISPR clusters contain sequences complementary to antecedent mobile elements and target invading nucleic acids. CRISPR clusters are transcribed and processed into CRISPR RNA (crRNA). Functions as a ssRNA-specific endoribonuclease. Involved in the integration of spacer DNA into the CRISPR cassette. The polypeptide is CRISPR-associated endoribonuclease Cas2 (Methanopyrus kandleri (strain AV19 / DSM 6324 / JCM 9639 / NBRC 100938)).